The chain runs to 140 residues: MFVLKNFKIVFSYFPIVLQYILNVALICLGVVLSVFLMKEVIQFMQELKLDGNESSYHLIDSIVVFFLYFEFIVMIIKYFQMNFHFPLRYFIYIGITAIVRLIIIDHDSPLDLLLYACAIFVLISALFIANSKMMRWDLE.

4 consecutive transmembrane segments (helical) span residues Ile16 to Phe36, Tyr57 to Ile77, His85 to Ile105, and Pro110 to Ala130.

It belongs to the PsiE family.

The protein localises to the cell membrane. The polypeptide is Protein PsiE homolog (Bacillus cereus (strain ATCC 14579 / DSM 31 / CCUG 7414 / JCM 2152 / NBRC 15305 / NCIMB 9373 / NCTC 2599 / NRRL B-3711)).